A 251-amino-acid polypeptide reads, in one-letter code: Triosephosphate isomerase (251 aa).

Residue 9-11 (NWK) coordinates substrate. The Electrophile role is filled by His-95. The active-site Proton acceptor is Glu-167. Substrate contacts are provided by residues Gly-173, Ser-213, and 234 to 235 (GG). Ser-213 bears the Phosphoserine mark.

Belongs to the triosephosphate isomerase family. In terms of assembly, homodimer.

The protein resides in the cytoplasm. The catalysed reaction is D-glyceraldehyde 3-phosphate = dihydroxyacetone phosphate. It functions in the pathway carbohydrate biosynthesis; gluconeogenesis. Its pathway is carbohydrate degradation; glycolysis; D-glyceraldehyde 3-phosphate from glycerone phosphate: step 1/1. In terms of biological role, involved in the gluconeogenesis. Catalyzes stereospecifically the conversion of dihydroxyacetone phosphate (DHAP) to D-glyceraldehyde-3-phosphate (G3P). This chain is Triosephosphate isomerase, found in Bacillus cereus (strain G9842).